A 162-amino-acid polypeptide reads, in one-letter code: Caveolin-2 (162 aa).

Residues 1 to 86 lie on the Cytoplasmic side of the membrane; it reads MGLEKEKLEC…FELVKFIFYR (86 aa). The helical intramembrane region spans 87 to 107; sequence LLTTLLAVPAAFILGVVFGVL. Residues 108 to 162 are Cytoplasmic-facing; sequence SCIHIWLVMPVTRSFLMLLPSIQVVWKSVTDMFITPLFHSMGRSLSSIQVRTSDT.

Belongs to the caveolin family. Homooligomer.

Its subcellular location is the golgi apparatus membrane. The protein localises to the cell membrane. It is found in the membrane. The protein resides in the caveola. Functionally, may act as a scaffolding protein within caveolar membranes. Interacts directly with G-protein alpha subunits and can functionally regulate their activity. In Takifugu rubripes (Japanese pufferfish), this protein is Caveolin-2 (cav2).